The following is a 215-amino-acid chain: 2-phospho-L-lactate guanylyltransferase (215 aa).

It belongs to the CofC family. In terms of assembly, homodimer.

It catalyses the reaction (2S)-2-phospholactate + GTP + H(+) = (2S)-lactyl-2-diphospho-5'-guanosine + diphosphate. It functions in the pathway cofactor biosynthesis; coenzyme F420 biosynthesis. In terms of biological role, guanylyltransferase that catalyzes the activation of (2S)-2-phospholactate (2-PL) as (2S)-lactyl-2-diphospho-5'-guanosine, via the condensation of 2-PL with GTP. It is involved in the biosynthesis of coenzyme F420, a hydride carrier cofactor. This chain is 2-phospho-L-lactate guanylyltransferase, found in Methanococcoides burtonii (strain DSM 6242 / NBRC 107633 / OCM 468 / ACE-M).